Reading from the N-terminus, the 776-residue chain is Endonuclease MutS2 (776 aa).

ATP is bound at residue 328 to 335 (GPNTGGKT). The Smr domain maps to 701 to 776 (LDLRGKRYEE…GSGATIVTFK (76 aa)).

Belongs to the DNA mismatch repair MutS family. MutS2 subfamily. As to quaternary structure, homodimer. Binds to stalled ribosomes, contacting rRNA.

Its function is as follows. Endonuclease that is involved in the suppression of homologous recombination and thus may have a key role in the control of bacterial genetic diversity. In terms of biological role, acts as a ribosome collision sensor, splitting the ribosome into its 2 subunits. Detects stalled/collided 70S ribosomes which it binds and splits by an ATP-hydrolysis driven conformational change. Acts upstream of the ribosome quality control system (RQC), a ribosome-associated complex that mediates the extraction of incompletely synthesized nascent chains from stalled ribosomes and their subsequent degradation. Probably generates substrates for RQC. The sequence is that of Endonuclease MutS2 from Streptococcus mutans serotype c (strain ATCC 700610 / UA159).